The primary structure comprises 386 residues: S-adenosylmethionine:tRNA ribosyltransferase-isomerase (386 aa).

This sequence belongs to the QueA family. In terms of assembly, monomer.

The protein localises to the cytoplasm. The catalysed reaction is 7-aminomethyl-7-carbaguanosine(34) in tRNA + S-adenosyl-L-methionine = epoxyqueuosine(34) in tRNA + adenine + L-methionine + 2 H(+). It participates in tRNA modification; tRNA-queuosine biosynthesis. Its function is as follows. Transfers and isomerizes the ribose moiety from AdoMet to the 7-aminomethyl group of 7-deazaguanine (preQ1-tRNA) to give epoxyqueuosine (oQ-tRNA). The sequence is that of S-adenosylmethionine:tRNA ribosyltransferase-isomerase from Rickettsia canadensis (strain McKiel).